The primary structure comprises 151 residues: UPAR/Ly6 domain-containing protein rtv (151 aa).

An N-terminal signal peptide occupies residues 1–19 (MQFTSLLLAVIFLISLVSI). Residues 20–125 (DGLLRRCYQC…QGDLCNGARS (106 aa)) lie on the Extracellular side of the membrane. 5 cysteine pairs are disulfide-bonded: Cys26/Cys65, Cys29/Cys38, Cys60/Cys88, Cys100/Cys113, and Cys115/Cys120. N-linked (GlcNAc...) asparagine glycosylation is present at Asn45. Asn121 is lipidated: GPI-anchor amidated asparagine. A propeptide spans 122–151 (GARSWSSAPQMILITMLPLLGSWLLQRMRN) (removed in mature form). The helical transmembrane segment at 126–146 (WSSAPQMILITMLPLLGSWLL) threads the bilayer. Residues 147–151 (QRMRN) lie on the Cytoplasmic side of the membrane.

Belongs to the quiver family.

It localises to the cell membrane. In terms of biological role, required for chitin fiber assembly and organization involved in cuticle formation and tracheal development. The polypeptide is UPAR/Ly6 domain-containing protein rtv (Drosophila melanogaster (Fruit fly)).